Consider the following 359-residue polypeptide: Type-1 angiotensin II receptor (359 aa).

The Extracellular segment spans residues 1–25 (MILNSSTEDGIKRIQDDCPKAGRHN). Asparagine 4 is a glycosylation site (N-linked (GlcNAc...) asparagine). Angiotensin II-binding residues include glutamine 15 and aspartate 17. 2 disulfides stabilise this stretch: cysteine 18/cysteine 274 and cysteine 101/cysteine 180. A helical transmembrane segment spans residues 26 to 55 (YIFVMIPTLYSIIFVVGIFGNSLVVIVIYF). At 56–61 (YMKLKT) the chain is on the cytoplasmic side. Residues 62–89 (VASVFLLNLALADLCFLLTLPLWAVYTA) form a helical membrane-spanning segment. Topologically, residues 90 to 98 (MEYRWPFGN) are extracellular. A helical transmembrane segment spans residues 99–125 (YLCKIASASVSFNLYASVFLLTCLSID). Topologically, residues 126 to 141 (RYVAIVHPMKSPVRRT) are cytoplasmic. The chain crosses the membrane as a helical span at residues 142-165 (MLMAKVTCIIIWLLAGLASLPTII). Residues 166 to 190 (HRNVFFIENTNITVCAFHYESQNST) are Extracellular-facing. Arginine 167 is an angiotensin II binding site. Asparagine 176 carries an N-linked (GlcNAc...) asparagine glycan. Residues phenylalanine 182, histidine 183, and tyrosine 184 each contribute to the angiotensin II site. N-linked (GlcNAc...) asparagine glycosylation is present at asparagine 188. A helical transmembrane segment spans residues 191 to 216 (LPIGLGLTKNILGFLFPFLIILTSYT). Lysine 199 contacts angiotensin II. At 217–239 (LIWKTLKRAYEIQKNKPRNDDIF) the chain is on the cytoplasmic side. A helical transmembrane segment spans residues 240-268 (KIIMAIVLFFFFSWVPHQIFTFLDVLIQL). The Extracellular portion of the chain corresponds to 269–278 (GIIHDCKIAD). The chain crosses the membrane as a helical span at residues 279-304 (IVDTAMPITICIAYFNNCLNPLFYGF). The Cytoplasmic segment spans residues 305–359 (LGKKFKKYFLQLLKYIPPKAKSHSSLSTKMSTLSYRPSDHGNASTKKSASCVEVE). Over residues 335–352 (STLSYRPSDHGNASTKKS) the composition is skewed to polar residues. Residues 335 to 359 (STLSYRPSDHGNASTKKSASCVEVE) are disordered. Cysteine 355 carries the S-palmitoyl cysteine lipid modification.

Belongs to the G-protein coupled receptor 1 family. Interacts with MAS1. Interacts with ARRB1. Interacts with FLNA (via filamin repeat 21); increases PKA-mediated phosphorylation of FLNA. In terms of processing, C-terminal Ser or Thr residues may be phosphorylated. Adrenal, liver, aorta, kidney, lung, testis and heart.

The protein localises to the cell membrane. In terms of biological role, receptor for angiotensin II, a vasoconstricting peptide, which acts as a key regulator of blood pressure and sodium retention by the kidney. The activated receptor in turn couples to G-alpha proteins G(q) (GNAQ, GNA11, GNA14 or GNA15) and thus activates phospholipase C and increases the cytosolic Ca(2+) concentrations, which in turn triggers cellular responses such as stimulation of protein kinase C. The chain is Type-1 angiotensin II receptor (AGTR1) from Canis lupus familiaris (Dog).